The chain runs to 336 residues: Probable deoxyhypusine synthase (336 aa).

Residue lysine 308 is the Nucleophile of the active site.

This sequence belongs to the deoxyhypusine synthase family. It depends on NAD(+) as a cofactor.

The catalysed reaction is [eIF5A protein]-L-lysine + spermidine = [eIF5A protein]-deoxyhypusine + propane-1,3-diamine. It functions in the pathway protein modification; eIF5A hypusination. Catalyzes the NAD-dependent oxidative cleavage of spermidine and the subsequent transfer of the butylamine moiety of spermidine to the epsilon-amino group of a specific lysine residue of the eIF-5A precursor protein to form the intermediate deoxyhypusine residue. The polypeptide is Probable deoxyhypusine synthase (Pyrococcus furiosus (strain ATCC 43587 / DSM 3638 / JCM 8422 / Vc1)).